A 178-amino-acid chain; its full sequence is Nucleoplasmin-3 (178 aa).

Ala-2 carries the N-acetylalanine modification. Phosphoserine occurs at positions 13 and 16. Arg-27 carries the post-translational modification Omega-N-methylarginine. The disordered stretch occupies residues 141–178 (TMSNDVSEEESEEEEEDSDEEEVELCPILPAKKQGGRP). Residues 146–164 (VSEEESEEEEEDSDEEEVE) show a composition bias toward acidic residues. Ser-147, Ser-151, and Ser-158 each carry phosphoserine.

Belongs to the nucleoplasmin family. Interacts with NPM (via N-terminus). Forms a pentamer with NPM at a ratio 4:1 (NPM3/NPM). Two pentamers form a decamer. Phosphorylated. As to expression, ubiquitous.

It localises to the nucleus. The protein resides in the nucleolus. In terms of biological role, plays a role in the regulation of diverse cellular processes such as ribosome biogenesis, chromatin remodeling or protein chaperoning. Modulates the histone chaperone function and the RNA-binding activity of nucleolar phosphoprotein B23/NPM. Efficiently mediates chromatin remodeling when included in a pentamer containing NPM3 and NPM. The protein is Nucleoplasmin-3 (NPM3) of Homo sapiens (Human).